A 225-amino-acid chain; its full sequence is UPF0758 protein Swoo_4561 (225 aa).

The MPN domain occupies 102–224; it reads ILSDPDLTRD…IVSFAERGWI (123 aa). Residues His-173, His-175, and Asp-186 each contribute to the Zn(2+) site. Positions 173-186 match the JAMM motif motif; the sequence is HNHPSGVAEPSHAD.

It belongs to the UPF0758 family.

The sequence is that of UPF0758 protein Swoo_4561 from Shewanella woodyi (strain ATCC 51908 / MS32).